A 456-amino-acid chain; its full sequence is Bifunctional protein GlmU (456 aa).

The pyrophosphorylase stretch occupies residues 1–229; it reads MLNNAMSVVI…LSEVEGVNNR (229 aa). Residues 11–14, Lys25, Gln76, 81–82, 103–105, Gly140, Glu154, Asn169, and Asn227 each bind UDP-N-acetyl-alpha-D-glucosamine; these read LAAG, GT, and YGD. Asp105 serves as a coordination point for Mg(2+). Asn227 is a Mg(2+) binding site. Residues 230 to 250 form a linker region; it reads LQLSRLERVYQSEQAEKLLLA. The interval 251–456 is N-acetyltransferase; that stretch reads GVMLRDPARF…EGWRRPVKKK (206 aa). Positions 333 and 351 each coordinate UDP-N-acetyl-alpha-D-glucosamine. His363 functions as the Proton acceptor in the catalytic mechanism. The UDP-N-acetyl-alpha-D-glucosamine site is built by Tyr366 and Asn377. Acetyl-CoA is bound by residues Ala380, 386–387, Ser405, Ala423, and Arg440; that span reads NY.

The protein in the N-terminal section; belongs to the N-acetylglucosamine-1-phosphate uridyltransferase family. In the C-terminal section; belongs to the transferase hexapeptide repeat family. As to quaternary structure, homotrimer. Mg(2+) serves as cofactor.

The protein resides in the cytoplasm. It catalyses the reaction alpha-D-glucosamine 1-phosphate + acetyl-CoA = N-acetyl-alpha-D-glucosamine 1-phosphate + CoA + H(+). The catalysed reaction is N-acetyl-alpha-D-glucosamine 1-phosphate + UTP + H(+) = UDP-N-acetyl-alpha-D-glucosamine + diphosphate. Its pathway is nucleotide-sugar biosynthesis; UDP-N-acetyl-alpha-D-glucosamine biosynthesis; N-acetyl-alpha-D-glucosamine 1-phosphate from alpha-D-glucosamine 6-phosphate (route II): step 2/2. The protein operates within nucleotide-sugar biosynthesis; UDP-N-acetyl-alpha-D-glucosamine biosynthesis; UDP-N-acetyl-alpha-D-glucosamine from N-acetyl-alpha-D-glucosamine 1-phosphate: step 1/1. It participates in bacterial outer membrane biogenesis; LPS lipid A biosynthesis. In terms of biological role, catalyzes the last two sequential reactions in the de novo biosynthetic pathway for UDP-N-acetylglucosamine (UDP-GlcNAc). The C-terminal domain catalyzes the transfer of acetyl group from acetyl coenzyme A to glucosamine-1-phosphate (GlcN-1-P) to produce N-acetylglucosamine-1-phosphate (GlcNAc-1-P), which is converted into UDP-GlcNAc by the transfer of uridine 5-monophosphate (from uridine 5-triphosphate), a reaction catalyzed by the N-terminal domain. The sequence is that of Bifunctional protein GlmU from Shigella dysenteriae serotype 1 (strain Sd197).